The primary structure comprises 230 residues: Porin OmpL (230 aa).

Residues 1–20 (MKSLNTLVILTSVISTSVFA) form the signal peptide.

The protein belongs to the oligogalacturonate-specific porin KdgM (TC 1.B.35) family. OmpL subfamily.

The protein localises to the cell outer membrane. Outer membrane channel protein that allows an efficient diffusion of low-molecular-weight solutes such as small sugars and tetraglycine. However, the specific substrate recognized by the OmpL channel is unknown. The polypeptide is Porin OmpL (ompL) (Salmonella typhimurium (strain LT2 / SGSC1412 / ATCC 700720)).